Reading from the N-terminus, the 658-residue chain is Translin-associated factor X-interacting protein 1 (658 aa).

Coiled coils occupy residues 144 to 184 (EISL…AEEY) and 230 to 295 (ALKM…LMQL).

In terms of assembly, interacts with TSNAX.

The protein localises to the cytoplasm. It is found in the perinuclear region. Functionally, possible role in spermatogenesis. The polypeptide is Translin-associated factor X-interacting protein 1 (Homo sapiens (Human)).